Here is a 1976-residue protein sequence, read N- to C-terminus: Myosin-10 (1976 aa).

Arg-18 bears the Omega-N-methylarginine mark. The Myosin N-terminal SH3-like domain occupies 31–81; sequence TAKKLVWIPSERHGFEAASIKEERGDEVLVELAENGKKAMVNKDDIQKMNP. Residues 85-783 enclose the Myosin motor domain; sequence SKVEDMAELT…VLAHLEEERD (699 aa). ATP is bound at residue 178 to 185; it reads GESGAGKT. At Lys-442 the chain carries N6-acetyllysine. An actin-binding region spans residues 661-683; that stretch reads LTKLMATLRNTNPNFVRCIIPNH. The region spanning 786-815 is the IQ domain; sequence ITDIIIFFQAVCRGYLARKAFAKKQQQLSA. Residues 845–1976 are a coiled coil; it reads LQVTRQEEEL…INETQPPQSE (1132 aa). The segment at 1126 to 1149 is disordered; it reads DFESEKASRNKAEKQKRDLSEELE. The span at 1129 to 1149 shows a compositional bias: basic and acidic residues; the sequence is SEKASRNKAEKQKRDLSEELE. Ser-1145 is subject to Phosphoserine. N6-acetyllysine is present on residues Lys-1241, Lys-1301, and Lys-1645. Disordered stretches follow at residues 1697-1718 and 1874-1976; these read ASSE…DEIA and KANA…PQSE. Positions 1698-1708 are enriched in basic and acidic residues; sequence SSERARRHAEQ. Arg-1930 bears the Omega-N-methylarginine mark. Phosphoserine occurs at positions 1935, 1937, 1938, and 1939. An Omega-N-methylarginine modification is found at Arg-1940. A phosphoserine mark is found at Ser-1952 and Ser-1956. The residue at position 1960 (Thr-1960) is a Phosphothreonine. Residues 1967–1976 are compositionally biased toward polar residues; the sequence is INETQPPQSE. Ser-1975 bears the Phosphoserine mark.

It belongs to the TRAFAC class myosin-kinesin ATPase superfamily. Myosin family. As to quaternary structure, myosin is a hexameric protein that consists of 2 heavy chain subunits (MHC), 2 alkali light chain subunits (MLC) and 2 regulatory light chain subunits (MLC-2). Interacts with PLEKHG6. Interacts with ECPAS. Interacts with KIF26B. Interacts with LARP6. Interacts with MCC. Interacts with CFAP95. Phosphorylated by ABL2.

It localises to the cell projection. It is found in the lamellipodium. Functionally, cellular myosin that appears to play a role in cytokinesis, cell shape, and specialized functions such as secretion and capping. Involved with LARP6 in the stabilization of type I collagen mRNAs for CO1A1 and CO1A2. During cell spreading, plays an important role in cytoskeleton reorganization, focal contacts formation (in the central part but not the margins of spreading cells), and lamellipodial extension; this function is mechanically antagonized by MYH9. The chain is Myosin-10 (MYH10) from Bos taurus (Bovine).